The primary structure comprises 430 residues: Probable GPI-anchored adhesin-like protein PGA32 (430 aa).

An N-terminal signal peptide occupies residues 1-16; it reads MKVSTLIIVSIPIVSG. Disordered regions lie at residues 88–195, 232–257, 278–302, and 314–336; these read LGQV…TVIN, IASASASSGSSTKDNDSDSSSARGIK, GGNGSGSNTNSYKNHSTTSTTSKYF, and SKSIYSNSTTSRSSLSVSSSSTD. Low complexity-rich tracts occupy residues 92–112 and 122–135; these read TTPSRTSTTTTTSNPIAPTTS and TDTAPTTTTTTNAR. The segment covering 141 to 167 has biased composition (polar residues); that stretch reads TPVTVSGDNVLTLFGNPNLSTGNDQSN. Low complexity-rich tracts occupy residues 168–187 and 233–253; these read SVSKTTAETTTTSSAPSSSS and ASASASSGSSTKDNDSDSSSA. Over residues 289-302 the composition is skewed to polar residues; sequence YKNHSTTSTTSKYF. A compositionally biased stretch (low complexity) spans 314–335; the sequence is SKSIYSNSTTSRSSLSVSSSST. The GPI-anchor amidated glycine moiety is linked to residue glycine 401. Residues 402 to 430 constitute a propeptide, removed in mature form; that stretch reads DGNKLIGGNKYLISFMWTNLILTMIMLFT.

The protein resides in the cell membrane. Its function is as follows. Putative adhesin which is involved in cell adhesion and virulence. In Candida albicans (strain SC5314 / ATCC MYA-2876) (Yeast), this protein is Probable GPI-anchored adhesin-like protein PGA32 (PGA32).